Consider the following 1792-residue polypeptide: Eukaryotic translation initiation factor 4G (1792 aa).

Positions 1–12 (MSQRGDRGEGHA) are enriched in basic and acidic residues. Disordered stretches follow at residues 1-285 (MSQR…PRPP), 424-446 (DSSG…TYGS), 491-590 (SPSM…PTPV), 612-659 (NSVP…EDLK), 678-761 (GVNK…NESH), 874-912 (VASE…EITR), 960-993 (SSSI…LDDW), 999-1018 (MSTP…EANG), 1275-1299 (GERE…EERE), 1407-1503 (WQQR…HRTT), and 1537-1600 (ELSS…KLYS). A compositionally biased stretch (gly residues) spans 21 to 42 (FGGGHRGGGGVGGAGKGGGGSS). Positions 88–107 (PLRPPAPQNAPAHVPVPAPR) are enriched in pro residues. 2 stretches are compositionally biased toward polar residues: residues 147 to 156 (RISSTSTSQG) and 179 to 191 (STMQ…SSAP). 3 stretches are compositionally biased toward low complexity: residues 216 to 243 (PQAP…PLQQ), 263 to 278 (PSQV…SVPN), and 432 to 442 (PSVQQQSQPVS). Residues 491 to 517 (SPSMNTGPGSNKDNLAGSTTSGHSQVT) are compositionally biased toward polar residues. Basic and acidic residues-rich tracts occupy residues 545–564 (DVNK…KDNE), 571–587 (KSGE…EKHP), and 633–643 (DSNKNATKDTR). Polar residues predominate over residues 644 to 654 (NLSQEPQSASS). Residues 699-718 (AADASSIDRSSARSTSESTE) show a composition bias toward low complexity. Basic and acidic residues predominate over residues 964–990 (ADHELPDESSEKEVNMGEDEGKKKVEL). The interval 1018–1030 (GRKRYSRDFLLTL) is EIF4E-binding. Residues 1183-1406 (QRQLKAILNK…RDSIDLRKNK (224 aa)) enclose the MIF4G domain. Residues 1278–1289 (EEAEADKTEEEG) show a composition bias toward acidic residues. 2 stretches are compositionally biased toward basic and acidic residues: residues 1290–1299 (EIKQTKEERE) and 1411–1432 (RKVE…ERHA). Low complexity-rich tracts occupy residues 1439–1450 (RGSVVGSGPRRG) and 1461–1470 (SAAALASPSS). 2 stretches are compositionally biased toward basic and acidic residues: residues 1490 to 1503 (IRFE…HRTT) and 1559 to 1572 (AREE…DRSG). A compositionally biased stretch (polar residues) spans 1576–1593 (PNTQFAGPSNRPASQEGR). Residues 1603-1727 (DLREKSISAI…SLQEVGTLIE (125 aa)) form the MI domain.

Belongs to the eukaryotic initiation factor 4G family. As to quaternary structure, EIF4F is a multi-subunit complex, the composition of which varies with external and internal environmental conditions. It is composed of at least EIF4A, EIF4E and EIF4G. In higher plants two isoforms of EIF4F have been identified, named isoform EIF4F and isoform EIF(iso)4F. Isoform EIF4F has subunits p220 and p26, whereas isoform EIF(iso)4F has subunits p82 and p28.

Its function is as follows. Component of the protein complex eIF4F, which is involved in the recognition of the mRNA cap, ATP-dependent unwinding of 5'-terminal secondary structure and recruitment of mRNA to the ribosome. This chain is Eukaryotic translation initiation factor 4G, found in Oryza sativa subsp. japonica (Rice).